The chain runs to 239 residues: DNA repair protein RecO (239 aa).

The protein belongs to the RecO family.

Functionally, involved in DNA repair and RecF pathway recombination. The sequence is that of DNA repair protein RecO from Aromatoleum aromaticum (strain DSM 19018 / LMG 30748 / EbN1) (Azoarcus sp. (strain EbN1)).